Reading from the N-terminus, the 219-residue chain is MSPMQQRELFSSPPIDLLFFEQQALKQGHRVIAGIDEAGRGALCGPVVAAAVILPTGMAIPGVDDSKKLSPRTREQLFDEIMARALSVGIGIGTPQLIDRINILQATRHAMAEAVDILAPRPDMLLIDGISTIDVPLPQKTITKGDSRSLTIAAASIIAKVSRDRMLTELDLLHPGYGFASHKGYGCASHMEAIRRLGPSPVHRLTFRGVREHVTCPSS.

The RNase H type-2 domain maps to 30–219 (RVIAGIDEAG…VREHVTCPSS (190 aa)). Residues aspartate 36, glutamate 37, and aspartate 128 each coordinate a divalent metal cation.

This sequence belongs to the RNase HII family. The cofactor is Mn(2+). Mg(2+) is required as a cofactor.

The protein resides in the cytoplasm. It carries out the reaction Endonucleolytic cleavage to 5'-phosphomonoester.. In terms of biological role, endonuclease that specifically degrades the RNA of RNA-DNA hybrids. This Pelobacter propionicus (strain DSM 2379 / NBRC 103807 / OttBd1) protein is Ribonuclease HII.